We begin with the raw amino-acid sequence, 121 residues long: UPF0091 protein PH1428 (121 aa).

The protein belongs to the UPF0091 family.

The chain is UPF0091 protein PH1428 from Pyrococcus horikoshii (strain ATCC 700860 / DSM 12428 / JCM 9974 / NBRC 100139 / OT-3).